Reading from the N-terminus, the 104-residue chain is Iron-sulfur cluster assembly protein CyaY (104 aa).

This sequence belongs to the frataxin family.

Its function is as follows. Involved in iron-sulfur (Fe-S) cluster assembly. May act as a regulator of Fe-S biogenesis. This is Iron-sulfur cluster assembly protein CyaY from Aliivibrio fischeri (strain MJ11) (Vibrio fischeri).